Consider the following 211-residue polypeptide: UPF0637 protein BLi01683/BL05149 (211 aa).

Belongs to the UPF0637 family.

This is UPF0637 protein BLi01683/BL05149 from Bacillus licheniformis (strain ATCC 14580 / DSM 13 / JCM 2505 / CCUG 7422 / NBRC 12200 / NCIMB 9375 / NCTC 10341 / NRRL NRS-1264 / Gibson 46).